The sequence spans 115 residues: MKFVLLFGVLLVTLFSYSSAEMLDDFDQADEDELLSLIEKEEARAKECTPRFYDCSHDRHSCCRSELFKDVCTCFYPEGGDNEVRTCQQPKHLKYMEKAADKAKKFGGKIKKWFG.

Residues Met1 to Ala20 form the signal peptide. Positions Glu21–Arg44 are excised as a propeptide. 3 disulfide bridges follow: Cys48–Cys63, Cys55–Cys72, and Cys62–Cys87.

The protein belongs to the neurotoxin 19 (CSTX) family. 01 subfamily. In terms of tissue distribution, expressed by the venom gland.

The protein localises to the secreted. The chain is U3-lycotoxin-Ls1u from Lycosa singoriensis (Wolf spider).